A 456-amino-acid polypeptide reads, in one-letter code: Bifunctional protein GlmU (456 aa).

Residues 1 to 229 (MSNSSMSVVI…LSEVEGVNNR (229 aa)) are pyrophosphorylase. UDP-N-acetyl-alpha-D-glucosamine is bound by residues 11–14 (LAAG), lysine 25, glutamine 76, 81–82 (GT), 103–105 (YGD), glycine 140, glutamate 154, asparagine 169, and asparagine 227. Aspartate 105 contributes to the Mg(2+) binding site. Asparagine 227 contributes to the Mg(2+) binding site. A linker region spans residues 230 to 250 (LQLAALERVYQSEQAEKLLLA). The interval 251–456 (GVMLLDPARF…QGWQRPIKKK (206 aa)) is N-acetyltransferase. Residues arginine 333 and lysine 351 each coordinate UDP-N-acetyl-alpha-D-glucosamine. Catalysis depends on histidine 363, which acts as the Proton acceptor. Tyrosine 366 and asparagine 377 together coordinate UDP-N-acetyl-alpha-D-glucosamine. Residues alanine 380, 386-387 (NY), serine 405, alanine 423, and arginine 440 each bind acetyl-CoA.

It in the N-terminal section; belongs to the N-acetylglucosamine-1-phosphate uridyltransferase family. In the C-terminal section; belongs to the transferase hexapeptide repeat family. As to quaternary structure, homotrimer. Requires Mg(2+) as cofactor.

It localises to the cytoplasm. It catalyses the reaction alpha-D-glucosamine 1-phosphate + acetyl-CoA = N-acetyl-alpha-D-glucosamine 1-phosphate + CoA + H(+). It carries out the reaction N-acetyl-alpha-D-glucosamine 1-phosphate + UTP + H(+) = UDP-N-acetyl-alpha-D-glucosamine + diphosphate. The protein operates within nucleotide-sugar biosynthesis; UDP-N-acetyl-alpha-D-glucosamine biosynthesis; N-acetyl-alpha-D-glucosamine 1-phosphate from alpha-D-glucosamine 6-phosphate (route II): step 2/2. It participates in nucleotide-sugar biosynthesis; UDP-N-acetyl-alpha-D-glucosamine biosynthesis; UDP-N-acetyl-alpha-D-glucosamine from N-acetyl-alpha-D-glucosamine 1-phosphate: step 1/1. Its pathway is bacterial outer membrane biogenesis; LPS lipid A biosynthesis. Catalyzes the last two sequential reactions in the de novo biosynthetic pathway for UDP-N-acetylglucosamine (UDP-GlcNAc). The C-terminal domain catalyzes the transfer of acetyl group from acetyl coenzyme A to glucosamine-1-phosphate (GlcN-1-P) to produce N-acetylglucosamine-1-phosphate (GlcNAc-1-P), which is converted into UDP-GlcNAc by the transfer of uridine 5-monophosphate (from uridine 5-triphosphate), a reaction catalyzed by the N-terminal domain. The polypeptide is Bifunctional protein GlmU (Yersinia enterocolitica serotype O:8 / biotype 1B (strain NCTC 13174 / 8081)).